Here is a 275-residue protein sequence, read N- to C-terminus: Large ribosomal subunit protein uL2 (275 aa).

Disordered regions lie at residues 24–48 (LTTD…NAGD) and 224–264 (VMNP…NKRT). The span at 31–42 (KPLTKTKQRTGG) shows a compositional bias: basic residues.

The protein belongs to the universal ribosomal protein uL2 family. Part of the 50S ribosomal subunit. Forms a bridge to the 30S subunit in the 70S ribosome.

Functionally, one of the primary rRNA binding proteins. Required for association of the 30S and 50S subunits to form the 70S ribosome, for tRNA binding and peptide bond formation. It has been suggested to have peptidyltransferase activity; this is somewhat controversial. Makes several contacts with the 16S rRNA in the 70S ribosome. The protein is Large ribosomal subunit protein uL2 of Koribacter versatilis (strain Ellin345).